Consider the following 227-residue polypeptide: PKHD-type hydroxylase GDI1238/Gdia_1949 (227 aa).

Residues 78–178 (RVVPPLFNRY…RLASFFWTQS (101 aa)) enclose the Fe2OG dioxygenase domain. Positions 96, 98, and 159 each coordinate Fe cation. Residue Arg-169 participates in 2-oxoglutarate binding.

Requires Fe(2+) as cofactor. L-ascorbate is required as a cofactor.

The sequence is that of PKHD-type hydroxylase GDI1238/Gdia_1949 from Gluconacetobacter diazotrophicus (strain ATCC 49037 / DSM 5601 / CCUG 37298 / CIP 103539 / LMG 7603 / PAl5).